Consider the following 20-residue polypeptide: Short cationic peptide-4c (20 aa).

A Glutamic acid 1-amide modification is found at E20.

Expressed by the venom gland.

It is found in the secreted. The polypeptide is Short cationic peptide-4c (Cupiennius salei (American wandering spider)).